A 145-amino-acid polypeptide reads, in one-letter code: MSWAPVLLMLFVYCTGCGPQPVLHQPPAMSSALGTTIRLTCTLRNDHDIGVYSVYWYQQRPGHPPRFLLRYFSQSDKSQGPQVPPRFSGSKDVARNRGYLSISELQPEDEAMYYCAMGARSSEKEEREREWEEEMEPTAARTRVP.

The signal sequence occupies residues 1-19 (MSWAPVLLMLFVYCTGCGP). A framework-1 region spans residues 20–41 (QPVLHQPPAMSSALGTTIRLTC). The Ig-like V-type domain maps to 20 to 132 (QPVLHQPPAM…EKEEREREWE (113 aa)). An intrachain disulfide couples Cys41 to Cys115. Residues 42 to 56 (TLRNDHDIGVYSVYW) are complementarity-determining-1. Positions 57–70 (YQQRPGHPPRFLLR) are framework-2. A complementarity-determining-2 region spans residues 71-81 (YFSQSDKSQGP). The segment at 82–115 (QVPPRFSGSKDVARNRGYLSISELQPEDEAMYYC) is framework-3. Basic and acidic residues predominate over residues 121–130 (SSEKEERERE). Positions 121 to 145 (SSEKEEREREWEEEMEPTAARTRVP) are disordered.

It belongs to the immunoglobulin superfamily. As to quaternary structure, interacts with IGLL1. Interacts with SYNV1/HRD1 (via N-terminus); this interaction leads to increased VPREB1 ubiquitination and degradation in pre-B cells, possibly through a lysosomal, not proteasomal, pathway. In terms of tissue distribution, only expressed by pre-B-cells.

The protein localises to the endoplasmic reticulum. Its function is as follows. Associates with the Ig-mu chain to form a molecular complex that is expressed on the surface of pre-B-cells. This complex presumably regulates Ig gene rearrangements in the early steps of B-cell differentiation. The protein is Immunoglobulin iota chain (VPREB1) of Homo sapiens (Human).